Consider the following 307-residue polypeptide: Elongation factor Ts (307 aa).

The interval 80–83 (TDFV) is involved in Mg(2+) ion dislocation from EF-Tu.

This sequence belongs to the EF-Ts family.

Its subcellular location is the cytoplasm. Its function is as follows. Associates with the EF-Tu.GDP complex and induces the exchange of GDP to GTP. It remains bound to the aminoacyl-tRNA.EF-Tu.GTP complex up to the GTP hydrolysis stage on the ribosome. This is Elongation factor Ts from Xanthobacter autotrophicus (strain ATCC BAA-1158 / Py2).